The primary structure comprises 269 residues: Tryptophan synthase alpha chain (269 aa).

Catalysis depends on proton acceptor residues E50 and D61.

This sequence belongs to the TrpA family. Tetramer of two alpha and two beta chains.

It carries out the reaction (1S,2R)-1-C-(indol-3-yl)glycerol 3-phosphate + L-serine = D-glyceraldehyde 3-phosphate + L-tryptophan + H2O. Its pathway is amino-acid biosynthesis; L-tryptophan biosynthesis; L-tryptophan from chorismate: step 5/5. Its function is as follows. The alpha subunit is responsible for the aldol cleavage of indoleglycerol phosphate to indole and glyceraldehyde 3-phosphate. This is Tryptophan synthase alpha chain from Francisella tularensis subsp. tularensis (strain WY96-3418).